Reading from the N-terminus, the 220-residue chain is Protein-L-isoaspartate O-methyltransferase (220 aa).

S65 is a catalytic residue.

This sequence belongs to the methyltransferase superfamily. L-isoaspartyl/D-aspartyl protein methyltransferase family.

Its subcellular location is the cytoplasm. It catalyses the reaction [protein]-L-isoaspartate + S-adenosyl-L-methionine = [protein]-L-isoaspartate alpha-methyl ester + S-adenosyl-L-homocysteine. Catalyzes the methyl esterification of L-isoaspartyl residues in peptides and proteins that result from spontaneous decomposition of normal L-aspartyl and L-asparaginyl residues. It plays a role in the repair and/or degradation of damaged proteins. The polypeptide is Protein-L-isoaspartate O-methyltransferase (Pelodictyon phaeoclathratiforme (strain DSM 5477 / BU-1)).